The chain runs to 560 residues: Oxygen-dependent choline dehydrogenase (560 aa).

6–35 (DYIIIGGGSAGSVLGGRLSEDVSNNVLVLE) contributes to the FAD binding site. The active-site Proton acceptor is the H472.

This sequence belongs to the GMC oxidoreductase family. The cofactor is FAD.

The catalysed reaction is choline + A = betaine aldehyde + AH2. It catalyses the reaction betaine aldehyde + NAD(+) + H2O = glycine betaine + NADH + 2 H(+). It participates in amine and polyamine biosynthesis; betaine biosynthesis via choline pathway; betaine aldehyde from choline (cytochrome c reductase route): step 1/1. In terms of biological role, involved in the biosynthesis of the osmoprotectant glycine betaine. Catalyzes the oxidation of choline to betaine aldehyde and betaine aldehyde to glycine betaine at the same rate. The sequence is that of Oxygen-dependent choline dehydrogenase from Staphylococcus xylosus.